The chain runs to 257 residues: Envelope glycoprotein (257 aa).

Residues 1-229 (FPILPGVWVD…EWAIHLLKGL (229 aa)) lie on the Extracellular side of the membrane. Residues Asn15, Asn58, and Asn68 are each glycosylated (N-linked (GlcNAc...) asparagine; by host). The segment at 95–115 (GPTARIFASILAPGVAAAQAL) is fusion peptide. Residues 112–162 (AQALREIERLACWSVKQANLTTSLLGDLLDDVTSIRHAVLQNRAAIDFLLL) adopt a coiled-coil conformation. Asn130 carries an N-linked (GlcNAc...) asparagine; by host glycan. The interval 151–167 (LQNRAAIDFLLLAHGHG) is immunosuppression. A glycan (N-linked (GlcNAc...) asparagine; by host) is linked at Asn178. Residues 180-210 (SDHSEAIQKKFQLMKEHVNKIGVDSDPIGSW) are a coiled coil. The helical transmembrane segment at 230 to 250 (LLGLVVILLLVVCLPCLLQFV) threads the bilayer. Cys245 carries S-palmitoyl cysteine; by host lipidation. The Cytoplasmic portion of the chain corresponds to 251–257 (SSSTRKM).

In terms of assembly, the mature envelope protein (Env) consists of a trimer of SU-TM heterodimers attached by noncovalent interactions or by a labile interchain disulfide bond. Specific enzymatic cleavages in vivo yield mature proteins. Envelope glycoproteins are synthesized as an inactive precursor that is N-glycosylated and processed likely by host cell furin or by a furin-like protease in the Golgi to yield the mature SU and TM proteins. The cleavage site between SU and TM requires the minimal sequence [KR]-X-[KR]-R. In terms of processing, the transmembrane protein is palmitoylated.

The protein localises to the virion membrane. The protein resides in the host cell membrane. In terms of biological role, the surface protein (SU) attaches the virus to the host cell by binding to its receptor. This interaction triggers the refolding of the transmembrane protein (TM) and is thought to activate its fusogenic potential by unmasking its fusion peptide. Fusion occurs at the host cell plasma membrane. Its function is as follows. The transmembrane protein (TM) acts as a class I viral fusion protein. Under the current model, the protein has at least 3 conformational states: pre-fusion native state, pre-hairpin intermediate state, and post-fusion hairpin state. During viral and target cell membrane fusion, the coiled coil regions (heptad repeats) assume a trimer-of-hairpins structure, positioning the fusion peptide in close proximity to the C-terminal region of the ectodomain. The formation of this structure appears to drive apposition and subsequent fusion of viral and target cell membranes. Membranes fusion leads to delivery of the nucleocapsid into the cytoplasm. This is Envelope glycoprotein (env) from Galliformes.